A 311-amino-acid chain; its full sequence is tRNA-cytidine(32) 2-sulfurtransferase (311 aa).

Residues 47–52 (SGGKDS) carry the PP-loop motif motif. Cys-122, Cys-125, and Cys-213 together coordinate [4Fe-4S] cluster.

It belongs to the TtcA family. Homodimer. The cofactor is Mg(2+). [4Fe-4S] cluster is required as a cofactor.

Its subcellular location is the cytoplasm. The enzyme catalyses cytidine(32) in tRNA + S-sulfanyl-L-cysteinyl-[cysteine desulfurase] + AH2 + ATP = 2-thiocytidine(32) in tRNA + L-cysteinyl-[cysteine desulfurase] + A + AMP + diphosphate + H(+). It functions in the pathway tRNA modification. Catalyzes the ATP-dependent 2-thiolation of cytidine in position 32 of tRNA, to form 2-thiocytidine (s(2)C32). The sulfur atoms are provided by the cysteine/cysteine desulfurase (IscS) system. This is tRNA-cytidine(32) 2-sulfurtransferase from Escherichia coli O127:H6 (strain E2348/69 / EPEC).